Here is a 308-residue protein sequence, read N- to C-terminus: Aspartate carbamoyltransferase catalytic subunit (308 aa).

Carbamoyl phosphate-binding residues include R49 and T50. Residue K77 coordinates L-aspartate. Carbamoyl phosphate contacts are provided by R99, H127, and Q130. 2 residues coordinate L-aspartate: R160 and R211. Carbamoyl phosphate contacts are provided by A252 and P253.

This sequence belongs to the aspartate/ornithine carbamoyltransferase superfamily. ATCase family. As to quaternary structure, heterododecamer (2C3:3R2) of six catalytic PyrB chains organized as two trimers (C3), and six regulatory PyrI chains organized as three dimers (R2).

It carries out the reaction carbamoyl phosphate + L-aspartate = N-carbamoyl-L-aspartate + phosphate + H(+). Its pathway is pyrimidine metabolism; UMP biosynthesis via de novo pathway; (S)-dihydroorotate from bicarbonate: step 2/3. Functionally, catalyzes the condensation of carbamoyl phosphate and aspartate to form carbamoyl aspartate and inorganic phosphate, the committed step in the de novo pyrimidine nucleotide biosynthesis pathway. The chain is Aspartate carbamoyltransferase catalytic subunit from Bacillus caldolyticus.